The primary structure comprises 1430 residues: MSRPSSVSPRQPAPGGGGGGGPSPCGPGGGGRAKGLKDIRIDEEVKIAVNIALERFRYGDQREMEFPSSLTSTERAFIHRLSQSLGLVSKSKGKGANRYLTVKKKDGSETAHAMMTCNLTHNTKHAVRSLIQRFPVTNKERTELLPKTERGNVFAVEAENREMSKTSGRLNNGIPQIPVKRGESEFDSFRQSLPVFEKQEEIVKIIKENKVVLIVGETGSGKTTQIPQFLLDDCFKNGIPCRIFCTQPRRLAAIAVAERVAAERRERIGQTIGYQIRLESRVSPKTLLTFCTNGVLLRTLMAGDSTLSTVTHVIVDEVHERDRFSDFLLTKLRDLLQKHPTLKLILSSAALDVNLFIRYFGSCPVIYIQGRPFEVKEMFLEDILRTTGYTNKEMLKYKKEKQQEEKQQTTLTEWYSAQENSFKPESQRQRTVLNVTDEYDLLDDGGDAVFSQLTEKDVNCLEPWLIKEMDACLSDIWLHKDIDAFAQVFHLILTENVSVDYRHSETSATALMVAAGRGFASQVEQLISMGANVHSKASNGWMALDWAKHFGQTEIVDLLESYSATLEFGNLDESSLVQTNGSDLSAEDRELLKAYHHSFDDEKVDLDLIMHLLYNICHSCDAGAVLIFLPGYDEIVGLRDRILFDDKRFADSTHRYQVFMLHSNMQTSDQKKVLKNPPAGVRKIILSTNIAETSITVNDVVFVIDSGKVKEKSFDALNFVTMLKMVWISKASAIQRKGRAGRCRPGICFRLFSRLRFQNMLEFQTPELLRMPLQELCLHTKLLAPVNCPIADFLMKAPEPPPALIVRNAVQMLKTIDAMDTWEDLTELGYHLADLPVEPHLGKMVLCAVVLKCLDPILTIACTLAYRDPFVLPTQASQKRAAMLCRKRFTAGAFSDHMALLRAFQAWQKARSDGWERAFCEKNFLSQATMEIIIGMRTQLLGQLRASGFVRARGGGDIRDVNTNSENWAVVKAALVAGMYPNLVHVDRENLVLTGPKEKKVRFHPASVLSQPQYKKIPPANGQAAAIKALPTDWLIYDEMTRAHRIANIRCCSAVTPVTILVFCGPARLASNALQEPSSFRVDGIPNDSSDSEMEDKTTANLAALKLDEWLHFTLEPEAASLLLQLRQKWHSLFLRRMRAPSKPWSQVDEATIRAIIAVLSTEEQSAGLQQPSGIGQRPRPMSSEELPLASSWRSNNSRKSSADTEFSDECTTAERVLMKSPSPALHPPQKYKDRGILHPKRGTEDRSDQSSLKSTDSSSYPSPCASPSPPSSGKGSKSPSPRPNMPVRYFIMKSSNLRNLEISQQKGIWSTTPSNERKLNRAFWESSIVYLVFSVQGSGHFQGFSRMSSEIGREKSQDWGSAGLGGVFKVEWIRKESLPFQFAHHLLNPWNDNKKVQISRDGQELEPLVGEQLLQLWERLPLGEKNTTD.

Positions 1–37 are disordered; sequence MSRPSSVSPRQPAPGGGGGGGPSPCGPGGGGRAKGLK. The span at 14-33 shows a compositional bias: gly residues; the sequence is PGGGGGGGPSPCGPGGGGRA. An R3H domain is found at 38–106; it reads DIRIDEEVKI…NRYLTVKKKD (69 aa). One can recognise a Helicase ATP-binding domain in the interval 203-369; that stretch reads VKIIKENKVV…FGSCPVIYIQ (167 aa). 216-223 lines the ATP pocket; that stretch reads GETGSGKT. The short motif at 316–319 is the DEAH box element; it reads DEVH. ANK repeat units follow at residues 506-538 and 539-571; these read TSATALMVAAGRGFASQVEQLISMGANVHSKAS and NGWMALDWAKHFGQTEIVDLLESYSATLEFGNL. One can recognise a Helicase C-terminal domain in the interval 612 to 784; that stretch reads LLYNICHSCD…ELCLHTKLLA (173 aa). Phosphoserine occurs at positions 1089, 1090, and 1092. Polar residues predominate over residues 1164-1174; sequence EQSAGLQQPSG. The interval 1164 to 1288 is disordered; that stretch reads EQSAGLQQPS…SPSPRPNMPV (125 aa). Residues 1191-1200 are compositionally biased toward low complexity; that stretch reads SSWRSNNSRK. At Ser-1202 the chain carries Phosphoserine. Over residues 1231-1249 the composition is skewed to basic and acidic residues; it reads KYKDRGILHPKRGTEDRSD. Residues 1250 to 1264 are compositionally biased toward low complexity; that stretch reads QSSLKSTDSSSYPSP. Phosphoserine is present on residues Ser-1263, Ser-1267, and Ser-1281. A YTH domain is found at 1288–1418; it reads VRYFIMKSSN…LVGEQLLQLW (131 aa). Residues 1294–1296, Trp-1310, and Trp-1360 each bind RNA; that span reads KSS.

The protein belongs to the DEAD box helicase family. DEAH subfamily. Interacts with MEIOC; binds transcripts that regulate the mitotic cell cycle inhibiting progression into metaphase, thereby allowing meiotic prophase to proceed normally. Interacts (via ANK repeats) with XRN1. Interacts with ZCCHC4. Associates with the small ribosomal subunit. Interacts with RBM46. As to expression, expressed in testis. Not detected in spermatogonia next to the tubule wall but is strongly expressed in spermatocytes, suggesting that it is up-regulated in germ cells upon entry into meiosis.

The protein resides in the cytoplasm. The protein localises to the perinuclear region. The enzyme catalyses ATP + H2O = ADP + phosphate + H(+). In terms of biological role, 3'-5' RNA helicase that plays a key role in the male and female germline by promoting transition from mitotic to meiotic divisions in stem cells. Specifically recognizes and binds N6-methyladenosine (m6A)-containing RNAs, a modification present at internal sites of mRNAs and some non-coding RNAs that plays a role in the efficiency of RNA processing and stability. Essential for ensuring a successful progression of the meiotic program in the germline by regulating the level of m6A-containing RNAs. Acts by binding and promoting degradation of m6A-containing mRNAs: the 3'-5' RNA helicase activity is required for this process and RNA degradation may be mediated by XRN1 exoribonuclease. Required for both spermatogenesis and oogenesis. This is 3'-5' RNA helicase YTHDC2 from Homo sapiens (Human).